We begin with the raw amino-acid sequence, 383 residues long: Succinyl-diaminopimelate desuccinylase (383 aa).

Residue H73 coordinates Zn(2+). D75 is a catalytic residue. D107 serves as a coordination point for Zn(2+). The active-site Proton acceptor is the E141. Positions 142, 170, and 356 each coordinate Zn(2+).

Belongs to the peptidase M20A family. DapE subfamily. In terms of assembly, homodimer. Zn(2+) is required as a cofactor. Requires Co(2+) as cofactor.

It catalyses the reaction N-succinyl-(2S,6S)-2,6-diaminopimelate + H2O = (2S,6S)-2,6-diaminopimelate + succinate. It functions in the pathway amino-acid biosynthesis; L-lysine biosynthesis via DAP pathway; LL-2,6-diaminopimelate from (S)-tetrahydrodipicolinate (succinylase route): step 3/3. Functionally, catalyzes the hydrolysis of N-succinyl-L,L-diaminopimelic acid (SDAP), forming succinate and LL-2,6-diaminopimelate (DAP), an intermediate involved in the bacterial biosynthesis of lysine and meso-diaminopimelic acid, an essential component of bacterial cell walls. In Pseudomonas putida (strain GB-1), this protein is Succinyl-diaminopimelate desuccinylase.